A 450-amino-acid chain; its full sequence is FERM domain-containing protein 8 (450 aa).

The region spanning 28–373 is the FERM domain; sequence MDVIVYLIND…YCIELSQTTE (346 aa).

The protein localises to the cytoplasm. It localises to the cytosol. It is found in the cell membrane. Its function is as follows. Promotes the cell surface stability of RHBDF1 and RHBDF2 and prevents their degradation via the endolysosomal pathway. By acting on RHBDF proteins, involved in ADAM17-mediated ligand shedding. May negatively regulate Wnt signaling. The sequence is that of FERM domain-containing protein 8 (frmd8) from Xenopus tropicalis (Western clawed frog).